The primary structure comprises 692 residues: Transforming growth factor beta activator LRRC33 (692 aa).

A signal peptide spans 1 to 18 (MELLPLWLCLGFHFLTVG). At 19–650 (WRNRSGTATA…CKWERLDLGL (632 aa)) the chain is on the extracellular side. The N-linked (GlcNAc...) asparagine glycan is linked to Asn21. One can recognise an LRRNT domain in the interval 29-56 (ASQGVCKLVGGAADCRGQSLASVPSSLP). 10 LRR repeats span residues 58-79 (HARM…SLQP), 82-103 (LLES…AFQE), 106-127 (HLRS…TAAA), 133-155 (GLRR…MLQN), 158-179 (SLRS…VFEG), 182-203 (RLRE…AFDG), 206-227 (ELRH…GLTR), 228-239 (LRVLNVSYNVLE), 251-272 (ELET…PQYS), and 273-294 (KLRT…YNTS). Residue Asn74 is glycosylated (N-linked (GlcNAc...) asparagine). Residue Asn155 is glycosylated (N-linked (GlcNAc...) asparagine). The N-linked (GlcNAc...) asparagine glycan is linked to Asn232. Asn292, Asn309, and Asn312 each carry an N-linked (GlcNAc...) asparagine glycan. LRR repeat units lie at residues 329–350 (DLRF…FLRK), 353–374 (SLSH…EHEP), 377–398 (ALTE…PGLA), 403–424 (SLRL…LFAN), 427–447 (NITT…PAAS), 463–484 (SLRS…PFQG), 486–507 (SLTY…APLQ), 512–534 (MLQV…DFSG), 537–558 (NLRD…GGSL), 559–580 (ALET…AVSE), and 585–594 (GLRTIYLSQN). Asn408 and Asn427 each carry an N-linked (GlcNAc...) asparagine glycan. N-linked (GlcNAc...) asparagine glycosylation occurs at Asn500. Residues 595 to 643 (PYDCCGVDGWGALQHGQTVADWAMVTCNLSSKIIRVTELPGGVPRDCKW) form the LRRCT domain. An N-linked (GlcNAc...) asparagine glycan is attached at Asn622. The chain crosses the membrane as a helical span at residues 651–671 (LYLVLILPSCLTLLVACTVIV). Topologically, residues 672–692 (LTFKKPLLQVIKSRCHWSSVY) are cytoplasmic.

It belongs to the LRRC32/LRRC33 family. Interacts with TGFB1; associates via disulfide bonds with the Latency-associated peptide chain (LAP) regulatory chain of TGFB1, leading to regulate activation of TGF-beta-1. Interacts (via LRR repeats) with TLR2, TLR3, TLR4, TLR9 and probably other Toll-like receptors. Interacts with CYBB/NOX2; the interaction is direct. In terms of tissue distribution, mainly expressed in cells of hematopoietic origin. Highly expressed in bone marrow, thymus, liver, lung, intestine and spleen. In the brain, highly expressed in microglia.

It localises to the cell membrane. The protein resides in the endoplasmic reticulum membrane. Its function is as follows. Key regulator of transforming growth factor beta-1 (TGFB1) specifically required for microglia function in the nervous system. Required for activation of latent TGF-beta-1 in macrophages and microglia: associates specifically via disulfide bonds with the Latency-associated peptide (LAP), which is the regulatory chain of TGFB1, and regulates integrin-dependent activation of TGF-beta-1. TGF-beta-1 activation mediated by LRRC33/NRROS is highly localized: there is little spreading of TGF-beta-1 activated from one microglial cell to neighboring microglia, suggesting the existence of localized and selective activation of TGF-beta-1 by LRRC33/NRROS. Indirectly plays a role in Toll-like receptor (TLR) signaling: ability to inhibit TLR-mediated NF-kappa-B activation and cytokine production is probably a consequence of its role in TGF-beta-1 signaling. In Homo sapiens (Human), this protein is Transforming growth factor beta activator LRRC33.